A 329-amino-acid polypeptide reads, in one-letter code: Cuticle collagen 6 (329 aa).

Triple-helical region regions lie at residues 142–171, 189–212, 216–248, 253–279, and 282–320; these read GAAGPPGPEGPPGNDGKDGRNGNDGKNGRD, GAPGPMGAMGPKGPPGPKGSPGEP, GKSGDDGMAGQPGPIGRPGRDGMKGAPGAAGRL, GPQGAPGKPGPIGPPGPKGNPGPDGQS, and GPPGPPGDSGTPGHEGRAGPNGPAGPPGDNGEKGDCGHC. The interval 146-329 is disordered; it reads PPGPEGPPGN…CPPPRTPPGY (184 aa). Basic and acidic residues predominate over residues 156–173; the sequence is DGKDGRNGNDGKNGRDAE. Low complexity predominate over residues 187–199; the sequence is PTGAPGPMGAMGP. A compositionally biased stretch (pro residues) spans 200 to 212; that stretch reads KGPPGPKGSPGEP. Residues 251-272 are compositionally biased toward pro residues; sequence VPGPQGAPGKPGPIGPPGPKGN. Over residues 273-282 the composition is skewed to low complexity; the sequence is PGPDGQSYQG. Over residues 320 to 329 the composition is skewed to pro residues; the sequence is CPPPRTPPGY.

Belongs to the cuticular collagen family. Collagen polypeptide chains are complexed within the cuticle by disulfide bonds and other types of covalent cross-links.

In terms of biological role, nematode cuticles are composed largely of collagen-like proteins. The cuticle functions both as an exoskeleton and as a barrier to protect the worm from its environment. This Caenorhabditis elegans protein is Cuticle collagen 6.